We begin with the raw amino-acid sequence, 109 residues long: uncharacterized protein (109 aa).

A helical membrane pass occupies residues 90 to 107; it reads IICNFWGSLLGVGIAFYQ.

It localises to the membrane. This is an uncharacterized protein from Saccharomyces cerevisiae (strain ATCC 204508 / S288c) (Baker's yeast).